Consider the following 361-residue polypeptide: tRNA-specific 2-thiouridylase MnmA (361 aa).

ATP contacts are provided by residues 9–16 and M35; that span reads GMSGGVDS. The interaction with target base in tRNA stretch occupies residues 95–97; the sequence is NPD. C100 functions as the Nucleophile in the catalytic mechanism. A disulfide bond links C100 and C196. G124 serves as a coordination point for ATP. The interaction with tRNA stretch occupies residues 146–148; that stretch reads KDQ. The Cysteine persulfide intermediate role is filled by C196. The tract at residues 308–309 is interaction with tRNA; it reads RY.

The protein belongs to the MnmA/TRMU family.

Its subcellular location is the cytoplasm. The catalysed reaction is S-sulfanyl-L-cysteinyl-[protein] + uridine(34) in tRNA + AH2 + ATP = 2-thiouridine(34) in tRNA + L-cysteinyl-[protein] + A + AMP + diphosphate + H(+). Its function is as follows. Catalyzes the 2-thiolation of uridine at the wobble position (U34) of tRNA, leading to the formation of s(2)U34. This Nitrosomonas eutropha (strain DSM 101675 / C91 / Nm57) protein is tRNA-specific 2-thiouridylase MnmA.